Here is a 441-residue protein sequence, read N- to C-terminus: ATP-dependent protease ATPase subunit HslU (441 aa).

Residues I18, 60 to 65 (GVGKTE), D254, E319, and R391 each bind ATP.

The protein belongs to the ClpX chaperone family. HslU subfamily. In terms of assembly, a double ring-shaped homohexamer of HslV is capped on each side by a ring-shaped HslU homohexamer. The assembly of the HslU/HslV complex is dependent on binding of ATP.

It is found in the cytoplasm. ATPase subunit of a proteasome-like degradation complex; this subunit has chaperone activity. The binding of ATP and its subsequent hydrolysis by HslU are essential for unfolding of protein substrates subsequently hydrolyzed by HslV. HslU recognizes the N-terminal part of its protein substrates and unfolds these before they are guided to HslV for hydrolysis. In Shewanella denitrificans (strain OS217 / ATCC BAA-1090 / DSM 15013), this protein is ATP-dependent protease ATPase subunit HslU.